The following is a 358-amino-acid chain: Vesicular integral-membrane protein VIP36 (358 aa).

Residues 1–46 (MAAEAWLWRWGWGWGQRCPGRPGLPGPGPSPTTFLHLLLLLGPVAA) form the signal peptide. At 47–324 (DITDGNSEHL…FRNGPLTGWR (278 aa)) the chain is on the lumenal side. An L-type lectin-like domain is found at 54 to 278 (EHLKREHSLI…DIISIKLFQL (225 aa)). The a carbohydrate site is built by S98 and D133. Ca(2+)-binding residues include D164, Y166, and N168. Residue 166–168 (YPN) coordinates a carbohydrate. N185 carries N-linked (GlcNAc...) asparagine glycosylation. H192 serves as a coordination point for a carbohydrate. Residue D195 coordinates Ca(2+). A disulfide bond links C204 and C241. Residue 262 to 264 (GDL) coordinates a carbohydrate. A helical transmembrane segment spans residues 325 to 347 (VFLLLLCALLGVVVCAVVGAVVF). Topologically, residues 348 to 358 (QKRQERNKRFY) are cytoplasmic.

Requires Ca(2+) as cofactor.

The protein localises to the golgi apparatus membrane. Plays a role as an intracellular lectin in the early secretory pathway. Interacts with N-acetyl-D-galactosamine and high-mannose type glycans and may also bind to O-linked glycans. Involved in the transport and sorting of glycoproteins carrying high mannose-type glycans. The sequence is that of Vesicular integral-membrane protein VIP36 (Lman2) from Mus musculus (Mouse).